The sequence spans 243 residues: Zinc import ATP-binding protein ZnuC (243 aa).

The ABC transporter domain occupies Leu-8–His-225. Gly-40–Ser-47 contributes to the ATP binding site.

The protein belongs to the ABC transporter superfamily. Zinc importer (TC 3.A.1.15.5) family. The complex is composed of two ATP-binding proteins (ZnuC), two transmembrane proteins (ZnuB) and a solute-binding protein (ZnuA).

The protein localises to the cell inner membrane. The catalysed reaction is Zn(2+)(out) + ATP(in) + H2O(in) = Zn(2+)(in) + ADP(in) + phosphate(in) + H(+)(in). Its function is as follows. Part of the ABC transporter complex ZnuABC involved in zinc import. Responsible for energy coupling to the transport system. The polypeptide is Zinc import ATP-binding protein ZnuC (Psychrobacter cryohalolentis (strain ATCC BAA-1226 / DSM 17306 / VKM B-2378 / K5)).